The primary structure comprises 249 residues: Phosphate import ATP-binding protein PstB 1 (249 aa).

An ABC transporter domain is found at 4 to 244; it reads FNIENLDLFY…PKDDRTQGYV (241 aa). 36–43 is an ATP binding site; that stretch reads GPSGCGKS.

It belongs to the ABC transporter superfamily. Phosphate importer (TC 3.A.1.7) family. In terms of assembly, the complex is composed of two ATP-binding proteins (PstB), two transmembrane proteins (PstC and PstA) and a solute-binding protein (PstS).

It is found in the cell inner membrane. The enzyme catalyses phosphate(out) + ATP + H2O = ADP + 2 phosphate(in) + H(+). Functionally, part of the ABC transporter complex PstSACB involved in phosphate import. Responsible for energy coupling to the transport system. This chain is Phosphate import ATP-binding protein PstB 1, found in Aliivibrio fischeri (strain ATCC 700601 / ES114) (Vibrio fischeri).